Reading from the N-terminus, the 402-residue chain is CCA-adding enzyme (402 aa).

ATP is bound by residues G32 and R35. CTP-binding residues include G32 and R35. The Mg(2+) site is built by D45 and D47. ATP contacts are provided by R119, D162, R165, R168, and R171. Residues R119, D162, R165, R168, and R171 each coordinate CTP.

It belongs to the tRNA nucleotidyltransferase/poly(A) polymerase family. Bacterial CCA-adding enzyme type 3 subfamily. As to quaternary structure, homodimer. Mg(2+) is required as a cofactor.

The catalysed reaction is a tRNA precursor + 2 CTP + ATP = a tRNA with a 3' CCA end + 3 diphosphate. The enzyme catalyses a tRNA with a 3' CCA end + 2 CTP + ATP = a tRNA with a 3' CCACCA end + 3 diphosphate. Functionally, catalyzes the addition and repair of the essential 3'-terminal CCA sequence in tRNAs without using a nucleic acid template. Adds these three nucleotides in the order of C, C, and A to the tRNA nucleotide-73, using CTP and ATP as substrates and producing inorganic pyrophosphate. tRNA 3'-terminal CCA addition is required both for tRNA processing and repair. Also involved in tRNA surveillance by mediating tandem CCA addition to generate a CCACCA at the 3' terminus of unstable tRNAs. While stable tRNAs receive only 3'-terminal CCA, unstable tRNAs are marked with CCACCA and rapidly degraded. The protein is CCA-adding enzyme of Lactococcus lactis subsp. cremoris (strain MG1363).